The following is a 294-amino-acid chain: Nucleoside-specific channel-forming protein Tsx (294 aa).

The first 22 residues, 1–22 (MKKTLLAASAVVALSASFTAGA), serve as a signal peptide directing secretion.

It belongs to the nucleoside-specific channel-forming outer membrane porin (Tsx) (TC 1.B.10) family.

The protein localises to the cell outer membrane. Its function is as follows. Functions as a substrate-specific channel for nucleosides and deoxynucleosides. Also functions in albicidin uptake and as receptor for colicin K. Also is a receptor for several Tsx-specific bacteriophages. This is Nucleoside-specific channel-forming protein Tsx from Klebsiella aerogenes (strain ATCC 13048 / DSM 30053 / CCUG 1429 / JCM 1235 / KCTC 2190 / NBRC 13534 / NCIMB 10102 / NCTC 10006 / CDC 819-56) (Enterobacter aerogenes).